We begin with the raw amino-acid sequence, 82 residues long: Kappa-actitoxin-Avd4j (82 aa).

Residues 1–19 (MNKALFLCLVVLCAAVVFA) form the signal peptide. Positions 20-31 (AEDLQKAKHAPF) are excised as a propeptide. 3 disulfides stabilise this stretch: C38–C73, C40–C66, and C56–C74.

The protein belongs to the sea anemone type 3 (BDS) potassium channel toxin family. Weakly expressed in the ectodermal tissue from the distal and proximal tentacles, body wall, and oral disk.

Its subcellular location is the secreted. The protein localises to the nematocyst. Blocks Kv3 voltage-gated potassium channels. Reduces blood pressure. The polypeptide is Kappa-actitoxin-Avd4j (Anemonia viridis (Snakelocks anemone)).